A 177-amino-acid chain; its full sequence is MKLQCVSLWLLGTILILCSVDNHGLRRCLISTDMHHIEESFQEIKRAIQAKDTFPNVTILSTLETLQIIKPLDVCCVTKNLLAFYVDRVFKDHQEPNPKILRKISSIANSFLYMQKTLRQCQEQRQCHCRQEATNATRVIHDNYDQLEVHAAAIKSLGELDVFLAWINKNHEVMFSA.

Positions 1–24 (MKLQCVSLWLLGTILILCSVDNHG) are cleaved as a signal peptide. Cystine bridges form between C28/C121, C75/C127, and C76/C129. N56 carries an N-linked (GlcNAc...) asparagine glycan. Residue N135 is glycosylated (N-linked (GlcNAc...) asparagine).

It belongs to the IL-10 family.

The protein resides in the secreted. In terms of biological role, cytokine that functions as an anti-inflammatory and proangiogenic factor. Polarizes adaptive immunity to an anti-inflammatory phenotype through induction of T-helper 2 responses by both down-regulation of IFN-gamma and up-regulation of IL4 and IL13. Produced by osteocytes, stimulates granulopoiesis and neutrophil formation. Exerts its biological effect through a receptor complex consisting of a heterodimer of IL20RA and IL20RB. In turn, activates the Janus kinase (JAK) and signal transducer and activator of transcription (STAT) pathway, and importantly, STAT3. This Homo sapiens (Human) protein is Interleukin-19 (IL19).